Here is a 298-residue protein sequence, read N- to C-terminus: Lipoyl synthase (298 aa).

[4Fe-4S] cluster is bound by residues C37, C42, C48, C63, C67, C70, and S277. The 218-residue stretch at 49–266 folds into the Radical SAM core domain; that stretch reads WGGGTATVML…KTLAESYGFL (218 aa).

Belongs to the radical SAM superfamily. Lipoyl synthase family. [4Fe-4S] cluster serves as cofactor.

Its subcellular location is the cytoplasm. It catalyses the reaction [[Fe-S] cluster scaffold protein carrying a second [4Fe-4S](2+) cluster] + N(6)-octanoyl-L-lysyl-[protein] + 2 oxidized [2Fe-2S]-[ferredoxin] + 2 S-adenosyl-L-methionine + 4 H(+) = [[Fe-S] cluster scaffold protein] + N(6)-[(R)-dihydrolipoyl]-L-lysyl-[protein] + 4 Fe(3+) + 2 hydrogen sulfide + 2 5'-deoxyadenosine + 2 L-methionine + 2 reduced [2Fe-2S]-[ferredoxin]. Its pathway is protein modification; protein lipoylation via endogenous pathway; protein N(6)-(lipoyl)lysine from octanoyl-[acyl-carrier-protein]: step 2/2. Catalyzes the radical-mediated insertion of two sulfur atoms into the C-6 and C-8 positions of the octanoyl moiety bound to the lipoyl domains of lipoate-dependent enzymes, thereby converting the octanoylated domains into lipoylated derivatives. This is Lipoyl synthase from Myxococcus xanthus (strain DK1622).